A 254-amino-acid polypeptide reads, in one-letter code: Pyruvate dehydrogenase complex repressor (254 aa).

The region spanning 9 to 77 (PKLSDVIEQQ…QGGGTFVQSS (69 aa)) is the HTH gntR-type domain. Positions 37 to 56 (ERELAKQFDVSRPSLREAIQ) form a DNA-binding region, H-T-H motif.

Functionally, transcriptional repressor for the pyruvate dehydrogenase complex genes aceEF and lpd. This Escherichia coli O6:H1 (strain CFT073 / ATCC 700928 / UPEC) protein is Pyruvate dehydrogenase complex repressor (pdhR).